The primary structure comprises 25 residues: Gastrin-releasing peptide (25 aa).

Position 25 is a methionine amide (methionine 25).

This sequence belongs to the bombesin/neuromedin-B/ranatensin family.

The protein localises to the secreted. The protein resides in the cytoplasmic vesicle. It is found in the secretory vesicle lumen. Stimulates the release of gastrin and other gastrointestinal hormones. This Scyliorhinus canicula (Small-spotted catshark) protein is Gastrin-releasing peptide (grp).